A 338-amino-acid polypeptide reads, in one-letter code: 2-oxoglutarate-dependent dioxygenase ecdG (338 aa).

The Fe2OG dioxygenase domain occupies 165 to 273; it reads PSVTNLGFLR…KYTLAYFVRP (109 aa). Fe cation is bound by residues histidine 190, aspartate 192, and histidine 249. Residue lysine 264 coordinates 2-oxoglutarate.

This sequence belongs to the iron/ascorbate-dependent oxidoreductase family. It depends on Fe(2+) as a cofactor.

The protein operates within antifungal biosynthesis. Its function is as follows. 2-oxoglutarate-dependent dioxygenase; part of the gene cluster that mediates the biosynthesis of echinocandin B, a fungal lipidated cyclic hexapeptide that acts as an antifungal agent. Linoleoyl-AMP, produced by the fatty-acyl-AMP ligase ecdI, is transferred to the initiation carrier domain (T0) of ecdA. The linoleoyl-S-phosphopantetheinyl-T0 is sequentially extended with L-ornithine, L-threonine, L-proline, L-homotyrosine, L-threonine, and 4R-methyl-L-proline to form the linear hexapeptide. Thereafter, the terminal condensation (C7) performs macrocyclization of the NRPS product and the cyclic scaffold is released from ecdA. All six of the amino acid residues are hydroxylated, including 4R,5R-dihydroxy-L-ornithine, 4R-hydroxyl-L-proline, 3S,4S-dihydroxy-L-homotyrosine, and 3S-hydroxyl-4S-methyl-L-prolin. In the pathway, all the hydroxylation reactions are proposed to occur following completion of the cyclic peptide, so the unhydroxylated precursor produced by ecdA will undergo six rounds of hydroxylation. Five hydroxylase genes (ecdG, ecdH, ecdK, htyE and htyF) are embedded within the echinocandin B (ecd) and L-homotyrosine (hty) clusters. This Aspergillus rugulosus (Emericella rugulosa) protein is 2-oxoglutarate-dependent dioxygenase ecdG.